Consider the following 266-residue polypeptide: Glutamate racemase (266 aa).

Residues 9 to 10 (DS) and 41 to 42 (YG) each bind substrate. C72 acts as the Proton donor/acceptor in catalysis. 73 to 74 (NT) is a substrate binding site. C184 acts as the Proton donor/acceptor in catalysis. 185–186 (TH) is a substrate binding site.

It belongs to the aspartate/glutamate racemases family.

It catalyses the reaction L-glutamate = D-glutamate. It functions in the pathway cell wall biogenesis; peptidoglycan biosynthesis. In terms of biological role, provides the (R)-glutamate required for cell wall biosynthesis. The sequence is that of Glutamate racemase from Staphylococcus aureus (strain Mu3 / ATCC 700698).